The primary structure comprises 182 residues: Large ribosomal subunit protein uL22 (182 aa).

The interval Ser-155–Gln-182 is disordered.

It belongs to the universal ribosomal protein uL22 family.

In Carabus granulatus (Ground beetle), this protein is Large ribosomal subunit protein uL22 (RpL17).